A 1556-amino-acid chain; its full sequence is uncharacterized protein (1556 aa).

Ser2 bears the N-acetylserine mark. Basic and acidic residues predominate over residues 145-156; the sequence is NQLENRKSLERK. Residues 145 to 170 form a disordered region; sequence NQLENRKSLERKPSRKRRKKNSNVND. One can recognise a Helicase ATP-binding domain in the interval 378–583; it reads SGDYPVCAKG…MIMSYLKLHP (206 aa). 391–398 contributes to the ATP binding site; that stretch reads EEMGLGKT. Residue Ser810 is modified to Phosphoserine. The tract at residues 810 to 850 is disordered; it reads SEDEDEHMDERFGEKETSSGDESDREINGAKNHDNHNNDGM. Basic and acidic residues-rich tracts occupy residues 817–827 and 834–846; these read MDERFGEKETS and REIN…DNHN. Residues 1239 to 1277 form an RING-type zinc finger; it reads CSICLGEVEIGAIIKCGHYFCKSCILTWLRAHSKCPICK. A compositionally biased stretch (basic and acidic residues) spans 1297 to 1309; the sequence is REKEIQEPRREGA. Disordered stretches follow at residues 1297–1319 and 1508–1534; these read REKE…SNEN and EKSK…AKFE. Positions 1310–1319 are enriched in low complexity; it reads DSSQDNSNEN. Residues 1363-1531 form the Helicase C-terminal domain; the sequence is KLISYLRLKS…ETDNEESDDA (169 aa). The segment covering 1508-1518 has biased composition (basic and acidic residues); it reads EKSKKGDKYDE. The span at 1519–1529 shows a compositional bias: acidic residues; that stretch reads AQDETDNEESD.

This sequence belongs to the SNF2/RAD54 helicase family.

The protein localises to the nucleus. Functionally, is probably involved in a pathway contributing to genomic integrity. This is an uncharacterized protein from Saccharomyces cerevisiae (strain ATCC 204508 / S288c) (Baker's yeast).